The following is a 120-amino-acid chain: NAD(P)H-quinone oxidoreductase subunit 3, chloroplastic (120 aa).

3 consecutive transmembrane segments (helical) span residues 2–22 (FLLY…VIPI), 64–84 (MFAL…PWAL), and 88–108 (ILGV…VLGL).

Belongs to the complex I subunit 3 family. In terms of assembly, NDH is composed of at least 16 different subunits, 5 of which are encoded in the nucleus.

The protein resides in the plastid. It is found in the chloroplast thylakoid membrane. It carries out the reaction a plastoquinone + NADH + (n+1) H(+)(in) = a plastoquinol + NAD(+) + n H(+)(out). The catalysed reaction is a plastoquinone + NADPH + (n+1) H(+)(in) = a plastoquinol + NADP(+) + n H(+)(out). In terms of biological role, NDH shuttles electrons from NAD(P)H:plastoquinone, via FMN and iron-sulfur (Fe-S) centers, to quinones in the photosynthetic chain and possibly in a chloroplast respiratory chain. The immediate electron acceptor for the enzyme in this species is believed to be plastoquinone. Couples the redox reaction to proton translocation, and thus conserves the redox energy in a proton gradient. The polypeptide is NAD(P)H-quinone oxidoreductase subunit 3, chloroplastic (Oenothera argillicola (Appalachian evening primrose)).